The primary structure comprises 548 residues: Fluconazole resistance protein 1 (548 aa).

Residues 30 to 94 form a disordered region; sequence SAREDETRKP…WNGPSDPENP (65 aa). The span at 31 to 51 shows a compositional bias: basic and acidic residues; it reads AREDETRKPENTDKKECKPDY. The segment covering 60 to 73 has biased composition (low complexity); the sequence is SCSESSTDSDSSGS. The next 12 helical transmembrane spans lie at 104 to 124, 139 to 159, 179 to 199, 203 to 223, 230 to 250, 261 to 281, 347 to 367, 376 to 396, 416 to 436, 440 to 460, 476 to 496, and 511 to 531; these read LVVFQIMLLTCVTYMGSSIYT, VVATLNLSLYVLGYGLGPIIF, FFFMIFQVGCATVHNIGGLIV, ISGILCSPSLATGGGTVADII, LVLGMWSAGAVAAPVLAPLLG, FIFWLLMWLSAATFILLAFFF, IAVAYGCFYLFFEAFPIVFVG, VGLAYMGFCVGCVLAYGLFGI, FLIVAMCVCWCLPLSLFLFGW, VHWILPVISEVFFVLAVFNIF, ASVFAGNGFCRASFACAFPLF, and VAWGSSLVGFLTLGLAIIPFI.

This sequence belongs to the major facilitator superfamily.

It is found in the membrane. Its function is as follows. Probable efflux transporter. Confers resistance to the azole derivative fluconazole (FCZ). The sequence is that of Fluconazole resistance protein 1 (FLR1) from Saccharomyces cerevisiae (strain ATCC 204508 / S288c) (Baker's yeast).